Reading from the N-terminus, the 113-residue chain is Flagellar hook-basal body complex protein FliE (113 aa).

It belongs to the FliE family.

It is found in the bacterial flagellum basal body. The protein is Flagellar hook-basal body complex protein FliE of Rhizobium etli (strain ATCC 51251 / DSM 11541 / JCM 21823 / NBRC 15573 / CFN 42).